Consider the following 462-residue polypeptide: Cysteine desulfurase, mitochondrial (462 aa).

Residues 132–133 (AT), Asn-212, Gln-240, and 260–262 (SGH) contribute to the pyridoxal 5'-phosphate site. Lys-263 bears the N6-(pyridoxal phosphate)lysine mark. A pyridoxal 5'-phosphate-binding site is contributed by Thr-300. Residue Cys-386 is the Cysteine persulfide intermediate of the active site. Cys-386 is a binding site for [2Fe-2S] cluster.

It belongs to the class-V pyridoxal-phosphate-dependent aminotransferase family. NifS/IscS subfamily. As to quaternary structure, component of the mitochondrial core iron-sulfur cluster (ISC) assembly complex at least composed of the cystein desulfurase Nfs1, the scaffold protein IscU, the accessory protein bcn92/Isd11/Lyrm4, and probably fh/frataxin. Interacts with bcn92/Isd11/Lyrm4 and IscU. The cofactor is pyridoxal 5'-phosphate. Ubiquitous expression at high levels in any life stage.

The protein resides in the mitochondrion. It is found in the nucleus. The catalysed reaction is (sulfur carrier)-H + L-cysteine = (sulfur carrier)-SH + L-alanine. Its activity is regulated as follows. Active when in complex with bcn92/Isd11/Lyrm4. L-cysteine binding kinetics are reduced in the presence of bcn92/Isd11/Lyrm4 and IscU. Activity is regulated by other components of the mitochondrial core iron-sulfur cluster (ISC) complex; Activity is reduced in the presence of IscU but enhanced when both IscU and fh/frataxin are present. In terms of biological role, catalyzes the removal of elemental sulfur from cysteine to produce alanine. It supplies the inorganic sulfur for iron-sulfur (Fe-S) clusters. The polypeptide is Cysteine desulfurase, mitochondrial (Drosophila melanogaster (Fruit fly)).